The sequence spans 261 residues: Urease accessory protein UreD (261 aa).

Belongs to the UreD family. As to quaternary structure, ureD, UreF and UreG form a complex that acts as a GTP-hydrolysis-dependent molecular chaperone, activating the urease apoprotein by helping to assemble the nickel containing metallocenter of UreC. The UreE protein probably delivers the nickel.

The protein resides in the cytoplasm. In terms of biological role, required for maturation of urease via the functional incorporation of the urease nickel metallocenter. This is Urease accessory protein UreD from Haemophilus influenzae (strain ATCC 51907 / DSM 11121 / KW20 / Rd).